Consider the following 238-residue polypeptide: Large ribosomal subunit protein uL2 (238 aa).

The tract at residues 197 to 219 (ASDHPFGGKRHSNHSKPFTVSKW) is disordered.

This sequence belongs to the universal ribosomal protein uL2 family. As to quaternary structure, part of the 50S ribosomal subunit. Forms a bridge to the 30S subunit in the 70S ribosome.

One of the primary rRNA binding proteins. Required for association of the 30S and 50S subunits to form the 70S ribosome, for tRNA binding and peptide bond formation. It has been suggested to have peptidyltransferase activity; this is somewhat controversial. Makes several contacts with the 16S rRNA in the 70S ribosome. The polypeptide is Large ribosomal subunit protein uL2 (Nanoarchaeum equitans (strain Kin4-M)).